Here is a 759-residue protein sequence, read N- to C-terminus: Short transient receptor potential channel 1 (759 aa).

The tract at residues 1-30 (MMAALYPSTDLSGVSSSSLPSSPSSSSPNE) is disordered. Residues 1-311 (MMAALYPSTD…FGQMSGYRRK (311 aa)) lie on the Cytoplasmic side of the membrane. Over residues 15-28 (SSSSLPSSPSSSSP) the composition is skewed to low complexity. ANK repeat units follow at residues 46–75 (LNEK…SGDL), 83–109 (LGRN…YGCQ), and 124–146 (MDVA…MLLK). Residues His-155, Cys-159, Cys-161, and Cys-164 each contribute to the Zn(2+) site. The segment at residues 312-345 (PTCKKIMTVLTVGIFWPVLSLCYLIAPKSQFGRI) is an intramembrane region (discontinuously helical). Topologically, residues 346-352 (IHTPFMK) are cytoplasmic. Residues 353–370 (FIIHGASYFTFLLLLNLY) form a helical membrane-spanning segment. Over 371 to 388 (SLVYNEDKKNTMGPALER) the chain is Extracellular. Residues 389–405 (IDYLLILWIIGMIWSDI) traverse the membrane as a helical segment. At 406-421 (KRLWYEGLEDFLEESR) the chain is on the cytoplasmic side. A helical membrane pass occupies residues 422–441 (NQLSFVMNSLYLATFALKVV). Residues 442–462 (AHNKFHDFADRKDWDAFHPTL) lie on the Extracellular side of the membrane. A helical membrane pass occupies residues 463 to 483 (VAEGLFAFANVLSYLRLFFMY). Over 484–502 (TTSSILGPLQISMGQMLQD) the chain is Cytoplasmic. A helical membrane pass occupies residues 503–524 (FGKFLGMFLLVLFSFTIGLTQL). Residues 525–589 (YDKGYTSKEQ…GEELQSFVGA (65 aa)) are Extracellular-facing. A disulfide bridge connects residues Cys-537 and Cys-542. A helical transmembrane segment spans residues 590-610 (VIVGTYNVVVVIVLTKLLVAM). Topologically, residues 611-759 (LHKSFQLIAN…SKYAMFYPKN (149 aa)) are cytoplasmic.

Belongs to the transient receptor (TC 1.A.4) family. STrpC subfamily. TRPC1 sub-subfamily. As to quaternary structure, heterotetramer with TRPC4 and/or TRPC5. Forms a heteromeric ion channel with TRPC4, with a 1:3 TRPC1:TRPC4 stoichiometry. Unlike other TRP channel proteins, does not form a homomeric channel. Interacts with TRPC4AP. Interacts with ITPR3. Interacts with MX1 and RNF24. Interacts with FKBP4. Interacts with PLSCR1. Interacts with PKD2L2. Forms a heterotetramer with PKD2 with a 2:2 stoichiometry; has distinct channel properties separate from PKD2 or TRPC1 homomers alone. In terms of processing, activation of PRKCA induces phosphorylation of TRPC1 and subsequent Ca2+ entry into cells. Expressed in brain, hippocampus, amygdala, Purkinje cells and single neurons in the cortex and striatum.

It is found in the cell membrane. The enzyme catalyses Ca(2+)(in) = Ca(2+)(out). The catalysed reaction is Na(+)(in) = Na(+)(out). It catalyses the reaction Li(+)(in) = Li(+)(out). It carries out the reaction Cs(+)(in) = Cs(+)(out). May be operated by a phosphatidylinositol second messenger system activated by receptor tyrosine kinases or G-protein coupled receptors. Also activated by intracellular calcium store depletion. Forms a receptor-activated non-selective calcium permeant cation channel. Forms a heteromeric ion channel with TRPC4 or TRPC5 that has reduced calcium permeability compared to the homomeric TRPC4 or TRPC5 channel. Also permeable to monovalent ions including sodium, lithium and cesium ions. The sequence is that of Short transient receptor potential channel 1 (Trpc1) from Rattus norvegicus (Rat).